The primary structure comprises 1308 residues: Receptor tyrosine-protein kinase erbB-4 (1308 aa).

The N-terminal stretch at 1–25 (MKLATGLWVWGSLLMAAGTVQPSAS) is a signal peptide. Topologically, residues 26–652 (QSVCAGTENK…TLPQHARTPL (627 aa)) are extracellular. Cysteines 29 and 56 form a disulfide. 3 N-linked (GlcNAc...) asparagine glycosylation sites follow: Asn-138, Asn-174, and Asn-181. Cystine bridges form between Cys-156-Cys-186, Cys-189-Cys-197, Cys-193-Cys-205, Cys-213-Cys-221, Cys-217-Cys-229, Cys-230-Cys-238, Cys-234-Cys-246, Cys-249-Cys-258, Cys-262-Cys-289, Cys-293-Cys-304, Cys-308-Cys-323, and Cys-326-Cys-330. The N-linked (GlcNAc...) asparagine glycan is linked to Asn-253. N-linked (GlcNAc...) asparagine glycans are attached at residues Asn-410, Asn-473, and Asn-495. 10 disulfide bridges follow: Cys-503–Cys-512, Cys-507–Cys-520, Cys-523–Cys-532, Cys-536–Cys-552, Cys-555–Cys-569, Cys-559–Cys-577, Cys-580–Cys-589, Cys-593–Cys-614, Cys-617–Cys-625, and Cys-621–Cys-633. A glycan (N-linked (GlcNAc...) asparagine) is linked at Asn-548. N-linked (GlcNAc...) asparagine glycosylation occurs at Asn-576. Asn-620 carries an N-linked (GlcNAc...) asparagine glycan. A membrane pass occupies residues 653–673 (IAAGVIGGLFILVIMALTFAV). Over 674–1308 (YVRRKSIKKK…PPYRHRNTVV (635 aa)) the chain is Cytoplasmic. The Nuclear localization signal motif lies at 676–684 (RRKSIKKKR). Residues 718–985 (LKRVKVLGSG…RMARDPQRYL (268 aa)) form the Protein kinase domain. ATP is bound by residues 724-732 (LGSGAFGTV), Lys-751, 797-799 (QLM), and 843-848 (DLAARN). Asp-843 acts as the Proton acceptor in catalysis. Tyr-875, Tyr-1035, and Tyr-1056 each carry phosphotyrosine; by autocatalysis. The PPxy motif 1 signature appears at 1032 to 1035 (PPIY). The interval 1117–1149 (PHVQEDSSTQRYSADPTVFAPERNPRGELDEEG) is disordered. A phosphotyrosine; by autocatalysis mark is found at Tyr-1150, Tyr-1162, Tyr-1188, Tyr-1202, Tyr-1242, Tyr-1258, and Tyr-1284. Residues 1282–1285 (PEYL) carry the PPxY motif 2 motif. The short motif at 1290–1292 (LKP) is the PDZ-binding element.

This sequence belongs to the protein kinase superfamily. Tyr protein kinase family. EGF receptor subfamily. In terms of assembly, monomer in the absence of bound ligand. Homodimer or heterodimer with another ERBB family member upon ligand binding, thus forming heterotetramers. Interacts with EGFR and ERBB2. Interacts with DLG2 (via its PDZ domain), DLG3 (via its PDZ domain), DLG4 (via its PDZ domain) and SNTB2 (via its PDZ domain). Interacts with MUC1. Interacts (via its PPxy motifs) with WWOX. Interacts (via the PPxY motif 3 of isoform JM-A CYT-2) with YAP1 (via the WW domain 1 of isoform 1). Interacts (isoform JM-A CYT-1 and isoform JM-B CYT-1) with WWP1. Interacts (via its intracellular domain) with TRIM28. Interacts (via the intracellular domains of both CYT-1 and CYT-2 isoforms) with KAP1; the interaction does not phosphorylate KAP1 but represses ERBB4-mediated transcriptional activity. Interacts with PRPU, DDX23, MATR3, RBM15, ILF3, KAP1, U5S1, U2SURP, ITCH, HNRNPU, AP2A1, NULC, LEO1, WWP2, IGHG1, HXK1, GRB7 and SRRT. Interacts (phosphorylated isoform JM-A CYT-1 and isoform JM-B CYT-1) with PIK3R1. Interacts with SHC1. Interacts with GRB2. Interacts (soluble intracellular domain) with BCL2. Interacts (phosphorylated) with STAT1. Interacts with CBFA2T3. Interacts (soluble intracellular domain) with STAT5A. Post-translationally, isoform JM-A CYT-1 and isoform JM-A CYT-2 are processed by ADAM17. Proteolytic processing in response to ligand or 12-O-tetradecanoylphorbol-13-acetate stimulation results in the production of 120 kDa soluble receptor forms and intermediate membrane-anchored 80 kDa fragments (m80HER4), which are further processed by a presenilin-dependent gamma-secretase to release a cytoplasmic intracellular domain (E4ICD; E4ICD1/s80Cyt1 or E4ICD2/s80Cyt2, depending on the isoform). Membrane-anchored 80 kDa fragments of the processed isoform JM-A CYT-1 are more readily degraded by the proteasome than fragments of isoform JM-A CYT-2, suggesting a prevalence of E4ICD2 over E4ICD1. Isoform JM-B CYT-1 and isoform JM-B CYT-2 lack the ADAM17 cleavage site and are not processed by ADAM17, precluding further processing by gamma-secretase. In terms of processing, autophosphorylated on tyrosine residues in response to ligand binding. Autophosphorylation occurs in trans, i.e. one subunit of the dimeric receptor phosphorylates tyrosine residues on the other subunit. Ligands trigger phosphorylation at specific tyrosine residues, thereby creating binding sites for scaffold proteins and effectors. Constitutively phosphorylated at a basal level when overexpressed in heterologous systems; ligand binding leads to increased phosphorylation. Phosphorylation at Tyr-1035 is important for interaction with STAT1. Phosphorylation at Tyr-1056 is important for interaction with PIK3R1. Phosphorylation at Tyr-1242 is important for interaction with SHC1. Phosphorylation at Tyr-1188 may also contribute to the interaction with SHC1. Isoform JM-A CYT-2 is constitutively phosphorylated on tyrosine residues in a ligand-independent manner. E4ICD2 but not E4ICD1 is phosphorylated on tyrosine residues. Ubiquitinated. During mitosis, the ERBB4 intracellular domain is ubiquitinated by the APC/C complex and targeted to proteasomal degradation. Isoform JM-A CYT-1 and isoform JM-B CYT-1 are ubiquitinated by WWP1. The ERBB4 intracellular domain (E4ICD1) is ubiquitinated, and this involves NEDD4. As to expression, isoform JM-A CYT-2 and isoform JM-B CYT-2 are expressed in cerebellum, cerebral cortex, spinal cord, medulla oblongata and eye, but the kidney expresses solely isoform JM-A CYT-2 and the heart solely isoform JM-B CYT-2.

The protein localises to the cell membrane. It localises to the nucleus. It is found in the mitochondrion. The enzyme catalyses L-tyrosyl-[protein] + ATP = O-phospho-L-tyrosyl-[protein] + ADP + H(+). Binding of a cognate ligand leads to dimerization and activation by autophosphorylation on tyrosine residues. In vitro kinase activity is increased by Mg(2+). Tyrosine-protein kinase that plays an essential role as cell surface receptor for neuregulins and EGF family members and regulates development of the heart, the central nervous system and the mammary gland, gene transcription, cell proliferation, differentiation, migration and apoptosis. Required for normal cardiac muscle differentiation during embryonic development, and for postnatal cardiomyocyte proliferation. Required for normal development of the embryonic central nervous system, especially for normal neural crest cell migration and normal axon guidance. Required for mammary gland differentiation, induction of milk proteins and lactation. Acts as cell-surface receptor for the neuregulins NRG1, NRG2, NRG3 and NRG4 and the EGF family members BTC, EREG and HBEGF. Ligand binding triggers receptor dimerization and autophosphorylation at specific tyrosine residues that then serve as binding sites for scaffold proteins and effectors. Ligand specificity and signaling is modulated by alternative splicing, proteolytic processing, and by the formation of heterodimers with other ERBB family members, thereby creating multiple combinations of intracellular phosphotyrosines that trigger ligand- and context-specific cellular responses. Mediates phosphorylation of SHC1 and activation of the MAP kinases MAPK1/ERK2 and MAPK3/ERK1. Isoform JM-A CYT-1 and isoform JM-B CYT-1 phosphorylate PIK3R1, leading to the activation of phosphatidylinositol 3-kinase and AKT1 and protect cells against apoptosis. Isoform JM-A CYT-1 and isoform JM-B CYT-1 mediate reorganization of the actin cytoskeleton and promote cell migration in response to NRG1. Isoform JM-A CYT-2 and isoform JM-B CYT-2 lack the phosphotyrosine that mediates interaction with PIK3R1, and hence do not phosphorylate PIK3R1, do not protect cells against apoptosis, and do not promote reorganization of the actin cytoskeleton and cell migration. Proteolytic processing of isoform JM-A CYT-1 and isoform JM-A CYT-2 gives rise to the corresponding soluble intracellular domains (4ICD) that translocate to the nucleus, promote nuclear import of STAT5A, activation of STAT5A, mammary epithelium differentiation, cell proliferation and activation of gene expression. The ERBB4 soluble intracellular domains (4ICD) colocalize with STAT5A at the CSN2 promoter to regulate transcription of milk proteins during lactation. The ERBB4 soluble intracellular domains can also translocate to mitochondria and promote apoptosis. The chain is Receptor tyrosine-protein kinase erbB-4 (Erbb4) from Mus musculus (Mouse).